Consider the following 240-residue polypeptide: Ribonuclease HII (240 aa).

Positions 31-222 (RLIAGVDEAG…VRRALGLETA (192 aa)) constitute an RNase H type-2 domain. Residues Asp-37, Glu-38, and Asp-130 each coordinate a divalent metal cation.

This sequence belongs to the RNase HII family. It depends on Mn(2+) as a cofactor. Mg(2+) is required as a cofactor.

Its subcellular location is the cytoplasm. It catalyses the reaction Endonucleolytic cleavage to 5'-phosphomonoester.. In terms of biological role, endonuclease that specifically degrades the RNA of RNA-DNA hybrids. This chain is Ribonuclease HII, found in Xanthomonas campestris pv. campestris (strain 8004).